We begin with the raw amino-acid sequence, 209 residues long: High frequency lysogenization protein HflD homolog (209 aa).

This sequence belongs to the HflD family.

It localises to the cytoplasm. The protein localises to the cell inner membrane. In Halorhodospira halophila (strain DSM 244 / SL1) (Ectothiorhodospira halophila (strain DSM 244 / SL1)), this protein is High frequency lysogenization protein HflD homolog.